Reading from the N-terminus, the 388-residue chain is Succinate--CoA ligase [ADP-forming] subunit beta (388 aa).

The ATP-grasp domain maps to 9–244 (KQLFAEYGLP…PSQEDEREAH (236 aa)). ATP is bound by residues Lys46, 53-55 (GRG), Glu99, Thr102, and Glu107. 2 residues coordinate Mg(2+): Asn199 and Asp213. Residues Asn264 and 321–323 (GIV) each bind substrate.

It belongs to the succinate/malate CoA ligase beta subunit family. As to quaternary structure, heterotetramer of two alpha and two beta subunits. Mg(2+) is required as a cofactor.

It catalyses the reaction succinate + ATP + CoA = succinyl-CoA + ADP + phosphate. It carries out the reaction GTP + succinate + CoA = succinyl-CoA + GDP + phosphate. The protein operates within carbohydrate metabolism; tricarboxylic acid cycle; succinate from succinyl-CoA (ligase route): step 1/1. Functionally, succinyl-CoA synthetase functions in the citric acid cycle (TCA), coupling the hydrolysis of succinyl-CoA to the synthesis of either ATP or GTP and thus represents the only step of substrate-level phosphorylation in the TCA. The beta subunit provides nucleotide specificity of the enzyme and binds the substrate succinate, while the binding sites for coenzyme A and phosphate are found in the alpha subunit. This chain is Succinate--CoA ligase [ADP-forming] subunit beta, found in Saccharophagus degradans (strain 2-40 / ATCC 43961 / DSM 17024).